Here is a 327-residue protein sequence, read N- to C-terminus: MQDLRLILIVVGAIAIIALLLHGLWTSRKERSSLFRDRPVKRTKQERVETPIESLDEGVGEVRVRTSHPQEKPSFNHLDDDDDEVPVIQHAETKSAQVKTASRQAPFASVQTDYDDPLLGGLSAEQPPHDLSRDPLLGKADESYSQPQHAEPPHVEKPAHQVAPQQHVESQQEPVAPAPEAKPQKLKETVLVLHVAAHHGGVIGGEVLLQSVLQSGFQFGEMGIFHRHLSPAGSGPVLFSLANMVKPGSFDPDTMSDFSTPGVSMFMMVPSYGDANQNFKLMLQSAQRIADDVGGVVLDDERRMMTPQKLESYKARIREVLDANTIA.

Residues 1 to 5 are Periplasmic-facing; sequence MQDLR. Residues 6-26 form a helical membrane-spanning segment; the sequence is LILIVVGAIAIIALLLHGLWT. Over 27-327 the chain is Cytoplasmic; the sequence is SRKERSSLFR…REVLDANTIA (301 aa). The span at 60-71 shows a compositional bias: basic and acidic residues; sequence GEVRVRTSHPQE. A disordered region spans residues 60–182; it reads GEVRVRTSHP…EPVAPAPEAK (123 aa). Polar residues-rich tracts occupy residues 94 to 103 and 163 to 173; these read KSAQVKTASR and APQQHVESQQE.

This sequence belongs to the ZipA family. Interacts with FtsZ via their C-terminal domains.

It localises to the cell inner membrane. Essential cell division protein that stabilizes the FtsZ protofilaments by cross-linking them and that serves as a cytoplasmic membrane anchor for the Z ring. Also required for the recruitment to the septal ring of downstream cell division proteins. The polypeptide is Cell division protein ZipA (Yersinia pseudotuberculosis serotype O:1b (strain IP 31758)).